Consider the following 351-residue polypeptide: Small ribosomal subunit biogenesis GTPase RsgA 1 (351 aa).

One can recognise a CP-type G domain in the interval Leu-100–Leu-258. Residues Ser-148–Asp-151 and Gly-200–Thr-208 each bind GTP. Zn(2+)-binding residues include Cys-282, Cys-287, His-289, and Cys-295.

The protein belongs to the TRAFAC class YlqF/YawG GTPase family. RsgA subfamily. In terms of assembly, monomer. Associates with 30S ribosomal subunit, binds 16S rRNA. It depends on Zn(2+) as a cofactor.

Its subcellular location is the cytoplasm. In terms of biological role, one of several proteins that assist in the late maturation steps of the functional core of the 30S ribosomal subunit. Helps release RbfA from mature subunits. May play a role in the assembly of ribosomal proteins into the subunit. Circularly permuted GTPase that catalyzes slow GTP hydrolysis, GTPase activity is stimulated by the 30S ribosomal subunit. The protein is Small ribosomal subunit biogenesis GTPase RsgA 1 of Oceanobacillus iheyensis (strain DSM 14371 / CIP 107618 / JCM 11309 / KCTC 3954 / HTE831).